The chain runs to 197 residues: uncharacterized protein (197 aa).

An N-terminal signal peptide occupies residues 1 to 23 (MSARAPKELRLALPPCLLNRTFA). Topologically, residues 24–61 (SPNASGSGNTGARGPGAVGSGTCITQVGQQLFQSFSST) are extracellular. Asn-26 carries an N-linked (GlcNAc...) asparagine glycan. Residues 62 to 82 (LVLIVLVTLIFCLIVLSLSTF) form a helical membrane-spanning segment. Residues 83–197 (HIHKRRMKKR…EGLLQTVVLS (115 aa)) are Cytoplasmic-facing. The segment at 94–180 (MQRAQEEYER…SSPQGAHAAS (87 aa)) is disordered. 2 stretches are compositionally biased toward basic and acidic residues: residues 96-107 (RAQEEYERDHCS) and 125-136 (HAKETRLERQPR). Residues 141-161 (CAPSNASSLSSSSPGLPCQGP) show a composition bias toward low complexity. Residues 162 to 171 (CAPPPPPPAS) are compositionally biased toward pro residues.

It is found in the membrane. This is an uncharacterized protein from Homo sapiens (Human).